A 781-amino-acid chain; its full sequence is Matrix non-peptidase homolog 1 (781 aa).

The first 27 residues, 1–27 (MTPPPASPSKKAKSSWLLIALIAVIIG), serve as a signal peptide directing secretion. Asparagine 54 carries N-linked (GlcNAc...) asparagine glycosylation. A compositionally biased stretch (low complexity) spans 63-94 (TSKATVSTTTTQSATTPSTTTTRIEETTTTTS). The interval 63 to 113 (TSKATVSTTTTQSATTPSTTTTRIEETTTTTSGAFDESVKNSEASTSTIPT) is disordered. N-linked (GlcNAc...) asparagine glycosylation is found at asparagine 183, asparagine 341, asparagine 375, and asparagine 520.

This Caenorhabditis elegans protein is Matrix non-peptidase homolog 1 (mnp-1).